Reading from the N-terminus, the 145-residue chain is Peptide methionine sulfoxide reductase MsrB (145 aa).

The MsrB domain occupies 6 to 129; the sequence is KNERLKQLTD…NSAALRFIPV (124 aa). Cys118 (nucleophile) is an active-site residue.

It belongs to the MsrB Met sulfoxide reductase family.

It catalyses the reaction L-methionyl-[protein] + [thioredoxin]-disulfide + H2O = L-methionyl-(R)-S-oxide-[protein] + [thioredoxin]-dithiol. The chain is Peptide methionine sulfoxide reductase MsrB from Listeria innocua serovar 6a (strain ATCC BAA-680 / CLIP 11262).